The sequence spans 188 residues: Methylated-DNA--protein-cysteine methyltransferase (188 aa).

The DNA site is built by tyrosine 120, glycine 121, and arginine 134. Residue cysteine 151 is the Nucleophile; methyl group acceptor of the active site. Serine 157 is a DNA binding site.

Belongs to the MGMT family.

The protein localises to the nucleus. It carries out the reaction a 6-O-methyl-2'-deoxyguanosine in DNA + L-cysteinyl-[protein] = S-methyl-L-cysteinyl-[protein] + a 2'-deoxyguanosine in DNA. The enzyme catalyses a 4-O-methyl-thymidine in DNA + L-cysteinyl-[protein] = a thymidine in DNA + S-methyl-L-cysteinyl-[protein]. Involved in the cellular defense against the biological effects of O6-methylguanine (O6-MeG) and O4-methylthymine (O4-MeT) in DNA. Repairs the methylated nucleobase in DNA by stoichiometrically transferring the methyl group to a cysteine residue in the enzyme. This is a suicide reaction: the enzyme is irreversibly inactivated. Prefers double-stranded DNA over single-stranded DNA as substrate. This is Methylated-DNA--protein-cysteine methyltransferase (MGT1) from Saccharomyces cerevisiae (strain ATCC 204508 / S288c) (Baker's yeast).